The following is a 271-amino-acid chain: Aquaporin-1 (271 aa).

The Cytoplasmic segment spans residues 1–11 (MASEFKKKLFW). Residues 12-29 (RAVVAEFLAMILFVFISI) form a helical membrane-spanning segment. Residues 30 to 48 (GSALGFNYPVRNNQTAGAA) are Extracellular-facing. N-linked (GlcNAc...) asparagine glycosylation is present at Asn42. A helical membrane pass occupies residues 49 to 67 (QDNVKVSLAFGLSIATLAQ). At 68-70 (SVG) the chain is on the cytoplasmic side. An intramembrane segment occupies 71 to 84 (HISGAHLNPAVTLG). The short motif at 78–80 (NPA) is the NPA 1 element. Residues 85 to 92 (LLLSCQIS) lie on the Cytoplasmic side of the membrane. Residues 93-111 (ILRAVMYIIAQCVGAIVAT) traverse the membrane as a helical segment. The Extracellular portion of the chain corresponds to 112–135 (AILSGITSSLPDNSLGRNELAPGV). A helical membrane pass occupies residues 136–155 (NSGQGLGIEIIGTLQLVLCV). Topologically, residues 156-165 (LATTDRRRRD) are cytoplasmic. The chain crosses the membrane as a helical span at residues 166–183 (LGGSGPLAIGLSVALGHL). Residues 184–188 (LAIDY) lie on the Extracellular side of the membrane. An intramembrane segment occupies 189 to 201 (TGCGINPARSFGS). An NPA 2 motif is present at residues 194–196 (NPA). At 202–208 (SVITHNF) the chain is on the extracellular side. Residues 209-226 (KDHWIFWVGPFIGGALAV) form a helical membrane-spanning segment. Over 227–271 (LIYDFILAPRSSDLTDRVKVWTSGQVEEYELDGDDINSRVEMKPK) the chain is Cytoplasmic. Ser249 bears the Phosphoserine mark. The residue at position 255 (Tyr255) is a Phosphotyrosine. Phosphoserine is present on Ser264.

It belongs to the MIP/aquaporin (TC 1.A.8) family. As to quaternary structure, homotetramer; each monomer provides an independent water pore. Component of the ankyrin-1 complex in the erythrocyte, composed of ANK1, RHCE, RHAG, SLC4A1, EPB42, GYPA, GYPB and AQP1. Interacts with EPHB2; involved in endolymph production in the inner ear. Identified in a complex with STOM. Interacts (via the N-terminal) with ANK1 (via ANK 1-5 repeats). Interacts (via the C-terminal) with EPB42.

The protein resides in the cell membrane. It carries out the reaction H2O(in) = H2O(out). It catalyses the reaction nitric oxide(out) = nitric oxide(in). The catalysed reaction is CO2(out) = CO2(in). The enzyme catalyses glycerol(in) = glycerol(out). It carries out the reaction H2O2(out) = H2O2(in). It catalyses the reaction K(+)(in) = K(+)(out). The catalysed reaction is Na(+)(in) = Na(+)(out). In terms of biological role, forms a water channel that facilitates the transport of water across cell membranes, playing a crucial role in water homeostasis in various tissues. Could also be permeable to small solutes including hydrogen peroxide, glycerol and gases such as amonnia (NH3), nitric oxide (NO) and carbon dioxide (CO2). Recruited to the ankyrin-1 complex, a multiprotein complex of the erythrocyte membrane, it could be part of a CO2 metabolon, linking facilitated diffusion of CO2 across the membrane, anion exchange of Cl(-)/HCO3(-) and interconversion of dissolved CO2 and carbonic acid in the cytosol. In vitro, it shows non-selective gated cation channel activity and may be permeable to cations like K(+) and Na(+) in vivo. In Canis lupus familiaris (Dog), this protein is Aquaporin-1.